We begin with the raw amino-acid sequence, 152 residues long: Prostaglandin E synthase (152 aa).

Residues 1–12 (MPAHSLVMSSPA) lie on the Lumenal side of the membrane. The chain crosses the membrane as a helical span at residues 13–41 (LPAFLLCSTLLVIKMYVVAIITGQVRLRK). A glutathione-binding site is contributed by R38. Topologically, residues 42-60 (KAFANPEDALRHGGPQYCR) are cytoplasmic. Residues 61–90 (SDPDVERCLRAHRNDMETIYPFLFLGFVYS) form a helical membrane-spanning segment. 73–77 (RNDME) lines the glutathione pocket. Over 91–95 (FLGPN) the chain is Lumenal. A helical membrane pass occupies residues 96–119 (PFVAWMHFLVFLVGRVAHTVAYLG). 2 residues coordinate glutathione: H113 and Y117. Topologically, residues 120–123 (KLRA) are cytoplasmic. Residues 124–152 (PIRSVTYTLAQLPCASMALQILWEAARHL) form a helical membrane-spanning segment. 126–130 (RSVTY) provides a ligand contact to glutathione.

The protein belongs to the MAPEG family. As to quaternary structure, homotrimer. The cofactor is glutathione.

The protein localises to the membrane. The protein resides in the cytoplasm. Its subcellular location is the perinuclear region. It catalyses the reaction prostaglandin H2 = prostaglandin E2. The catalysed reaction is 2-glyceryl-prostaglandin H2 = 2-glyceryl-prostaglandin E2. It carries out the reaction prostaglandin G2 = (15S)-15-hydroperoxy-prostaglandin E2. The enzyme catalyses 1-chloro-2,4-dinitrobenzene + glutathione = 2,4-dinitrophenyl-S-glutathione + chloride + H(+). It catalyses the reaction (5S)-hydroperoxy-(6E,8Z,11Z,14Z)-eicosatetraenoate + 2 glutathione = (5S)-hydroxy-(6E,8Z,11Z,14Z)-eicosatetraenoate + glutathione disulfide + H2O. It functions in the pathway lipid metabolism; prostaglandin biosynthesis. Its activity is regulated as follows. Induced by interleukin IL1B. Terminal enzyme of the cyclooxygenase (COX)-2-mediated prostaglandin E2 (PGE2) biosynthetic pathway. Catalyzes the glutathione-dependent oxidoreduction of prostaglandin endoperoxide H2 (PGH2) to prostaglandin E2 (PGE2) in response to inflammatory stimuli. Plays a key role in inflammation response, fever and pain. Also catalyzes the oxidoreduction of endocannabinoids into prostaglandin glycerol esters and PGG2 into 15-hydroperoxy-PGE2. In addition, displays low glutathione transferase and glutathione-dependent peroxidase activities, toward 1-chloro-2,4-dinitrobenzene and 5-hydroperoxyicosatetraenoic acid (5-HPETE), respectively. In Homo sapiens (Human), this protein is Prostaglandin E synthase (PTGES).